The sequence spans 226 residues: uncharacterized protein (226 aa).

A helical transmembrane segment spans residues 5–25 (IKTVSFAAAAILVVIICTFLI).

It is found in the cell membrane. This is an uncharacterized protein from Bacillus subtilis (strain 168).